Reading from the N-terminus, the 362-residue chain is MITLDLTLPDCRYPIHIGQGVLDRAGELVAPHLPQSRALIVTNDVVAPLYLERCRQSLQAAGVCTEVVILPDGEAHKDWQTLNCIFDALIAMRAERKTALVALGGGVIGDMTGFAAACWQRGAPFVQIPTTLLAQVDSSVGGKTAINHPAGKNMIGAFWQPRVVLADLDVLDTLPEREFSAGLAEVYKYGLIDNLPFFEWCEQQVPALLARDKAALAHAVEVSCRMKAAIVGQDEKEQGVRALLNLGHTFGHAIEAGLGFGVWLHGEAVAAGMVLAAETAQEMGQLESADVLRIRALLLQSNLPVVPPAWPLATWLELMGHDKKVEGGQLRFVLPDRLGHCRLESGVGEKYLEKVLIHNIRD.

NAD(+) contacts are provided by residues 72-77, 106-110, 130-131, Lys143, and Lys152; these read DGEAHK, GVIGD, and TT. Positions 185, 248, and 265 each coordinate Zn(2+).

Belongs to the sugar phosphate cyclases superfamily. Dehydroquinate synthase family. Requires Co(2+) as cofactor. Zn(2+) serves as cofactor. It depends on NAD(+) as a cofactor.

The protein localises to the cytoplasm. It catalyses the reaction 7-phospho-2-dehydro-3-deoxy-D-arabino-heptonate = 3-dehydroquinate + phosphate. Its pathway is metabolic intermediate biosynthesis; chorismate biosynthesis; chorismate from D-erythrose 4-phosphate and phosphoenolpyruvate: step 2/7. Its function is as follows. Catalyzes the conversion of 3-deoxy-D-arabino-heptulosonate 7-phosphate (DAHP) to dehydroquinate (DHQ). The polypeptide is 3-dehydroquinate synthase (Laribacter hongkongensis (strain HLHK9)).